Here is a 294-residue protein sequence, read N- to C-terminus: Probable aspartoacylase (294 aa).

His-14 and Glu-17 together coordinate Zn(2+). Residues Arg-56 and 63–64 (NR) each bind substrate. His-106 contributes to the Zn(2+) binding site. Substrate contacts are provided by Glu-164 and Tyr-275.

The protein belongs to the AspA/AstE family. Aspartoacylase subfamily. Requires Zn(2+) as cofactor.

It catalyses the reaction an N-acyl-L-aspartate + H2O = a carboxylate + L-aspartate. In Nostoc sp. (strain PCC 7120 / SAG 25.82 / UTEX 2576), this protein is Probable aspartoacylase.